Reading from the N-terminus, the 61-residue chain is MDLQQSETDDKQPEQLVIYVCGDCGQENILKRGDVFQCRDCGFRILYKKRILDKKETRIGV.

The Zn(2+) site is built by Cys21, Cys24, Cys38, and Cys41.

Belongs to the archaeal Rpo12/eukaryotic RPC10 RNA polymerase subunit family.

Its subcellular location is the nucleus. The sequence is that of DNA-directed RNA polymerase subunit 12-like protein (NRPB12L) from Arabidopsis thaliana (Mouse-ear cress).